The sequence spans 278 residues: Acetyl-coenzyme A carboxylase carboxyl transferase subunit beta (278 aa).

One can recognise a CoA carboxyltransferase N-terminal domain in the interval 23-278; sequence LWSKCDSCGA…QLIKLLGHMK (256 aa). Zn(2+)-binding residues include C27, C30, C46, and C49. A C4-type zinc finger spans residues 27 to 49; the sequence is CDSCGAALHKKQLEDHLYTCPHC.

Belongs to the AccD/PCCB family. In terms of assembly, acetyl-CoA carboxylase is a heterohexamer composed of biotin carboxyl carrier protein (AccB), biotin carboxylase (AccC) and two subunits each of ACCase subunit alpha (AccA) and ACCase subunit beta (AccD). It depends on Zn(2+) as a cofactor.

The protein resides in the cytoplasm. The catalysed reaction is N(6)-carboxybiotinyl-L-lysyl-[protein] + acetyl-CoA = N(6)-biotinyl-L-lysyl-[protein] + malonyl-CoA. It functions in the pathway lipid metabolism; malonyl-CoA biosynthesis; malonyl-CoA from acetyl-CoA: step 1/1. Functionally, component of the acetyl coenzyme A carboxylase (ACC) complex. Biotin carboxylase (BC) catalyzes the carboxylation of biotin on its carrier protein (BCCP) and then the CO(2) group is transferred by the transcarboxylase to acetyl-CoA to form malonyl-CoA. This chain is Acetyl-coenzyme A carboxylase carboxyl transferase subunit beta, found in Chlorobaculum tepidum (strain ATCC 49652 / DSM 12025 / NBRC 103806 / TLS) (Chlorobium tepidum).